A 111-amino-acid polypeptide reads, in one-letter code: Universal stress protein B (111 aa).

A run of 2 helical transmembrane segments spans residues 1 to 21 (MIST…NMAR) and 90 to 110 (FILT…LMIW).

This sequence belongs to the universal stress protein B family.

The protein localises to the cell inner membrane. In Cronobacter sakazakii (strain ATCC BAA-894) (Enterobacter sakazakii), this protein is Universal stress protein B.